Reading from the N-terminus, the 215-residue chain is tRNA (guanine-N(7)-)-methyltransferase (215 aa).

Glutamate 44, glutamate 69, aspartate 96, and aspartate 118 together coordinate S-adenosyl-L-methionine. Aspartate 118 is an active-site residue. Lysine 122 provides a ligand contact to substrate. Residues 124 to 129 are interaction with RNA; that stretch reads RHEKRR. Substrate-binding positions include aspartate 154 and 192 to 195; that span reads TEYE.

The protein belongs to the class I-like SAM-binding methyltransferase superfamily. TrmB family.

The catalysed reaction is guanosine(46) in tRNA + S-adenosyl-L-methionine = N(7)-methylguanosine(46) in tRNA + S-adenosyl-L-homocysteine. It participates in tRNA modification; N(7)-methylguanine-tRNA biosynthesis. Catalyzes the formation of N(7)-methylguanine at position 46 (m7G46) in tRNA. In Limosilactobacillus fermentum (strain NBRC 3956 / LMG 18251) (Lactobacillus fermentum), this protein is tRNA (guanine-N(7)-)-methyltransferase.